Here is a 277-residue protein sequence, read N- to C-terminus: Diaminopimelate epimerase (277 aa).

Asn-13, Gln-46, and Asn-66 together coordinate substrate. The active-site Proton donor is Cys-75. Substrate is bound by residues Gly-76 to Asn-77, Asn-159, Asn-192, and Glu-210 to Arg-211. Cys-219 serves as the catalytic Proton acceptor. Residue Gly-220–Thr-221 participates in substrate binding.

Belongs to the diaminopimelate epimerase family. As to quaternary structure, homodimer.

It is found in the cytoplasm. The enzyme catalyses (2S,6S)-2,6-diaminopimelate = meso-2,6-diaminopimelate. The protein operates within amino-acid biosynthesis; L-lysine biosynthesis via DAP pathway; DL-2,6-diaminopimelate from LL-2,6-diaminopimelate: step 1/1. In terms of biological role, catalyzes the stereoinversion of LL-2,6-diaminopimelate (L,L-DAP) to meso-diaminopimelate (meso-DAP), a precursor of L-lysine and an essential component of the bacterial peptidoglycan. This Aromatoleum aromaticum (strain DSM 19018 / LMG 30748 / EbN1) (Azoarcus sp. (strain EbN1)) protein is Diaminopimelate epimerase.